Reading from the N-terminus, the 289-residue chain is uncharacterized protein (289 aa).

This is an uncharacterized protein from Homo sapiens (Human).